The following is a 575-amino-acid chain: V-type ATP synthase alpha chain (575 aa).

Residue 238–245 participates in ATP binding; it reads GPFGAGKT.

It belongs to the ATPase alpha/beta chains family.

The catalysed reaction is ATP + H2O + 4 H(+)(in) = ADP + phosphate + 5 H(+)(out). Produces ATP from ADP in the presence of a proton gradient across the membrane. The V-type alpha chain is a catalytic subunit. In Borrelia garinii subsp. bavariensis (strain ATCC BAA-2496 / DSM 23469 / PBi) (Borreliella bavariensis), this protein is V-type ATP synthase alpha chain.